We begin with the raw amino-acid sequence, 456 residues long: Phosphoglucomutase/phosphomannomutase (456 aa).

The active-site Phosphoserine intermediate is the Ser-101. The Mg(2+) site is built by Ser-101, Asp-243, Asp-245, and Asp-247. Position 101 is a phosphoserine; by autocatalysis (Ser-101).

Belongs to the phosphohexose mutase family. As to quaternary structure, homotetramer. It depends on Mg(2+) as a cofactor. In terms of processing, activated by phosphorylation.

The enzyme catalyses alpha-D-glucose 1-phosphate = alpha-D-glucose 6-phosphate. It carries out the reaction alpha-D-mannose 1-phosphate = D-mannose 6-phosphate. Its function is as follows. Catalyzes the interconversion of glucose 1-phosphate and glucose 6-phosphate, and the interconversion of mannose 1-phosphate and mannose 6-phosphate. Also displays low activity with deoxyribose 1-phosphate and glucosamine 1-phosphate. The chain is Phosphoglucomutase/phosphomannomutase from Thermococcus kodakarensis (strain ATCC BAA-918 / JCM 12380 / KOD1) (Pyrococcus kodakaraensis (strain KOD1)).